The following is a 326-amino-acid chain: Phosphate acyltransferase (326 aa).

This sequence belongs to the PlsX family. As to quaternary structure, homodimer. Probably interacts with PlsY.

The protein localises to the cytoplasm. It carries out the reaction a fatty acyl-[ACP] + phosphate = an acyl phosphate + holo-[ACP]. It functions in the pathway lipid metabolism; phospholipid metabolism. Catalyzes the reversible formation of acyl-phosphate (acyl-PO(4)) from acyl-[acyl-carrier-protein] (acyl-ACP). This enzyme utilizes acyl-ACP as fatty acyl donor, but not acyl-CoA. This is Phosphate acyltransferase from Petrotoga mobilis (strain DSM 10674 / SJ95).